A 623-amino-acid chain; its full sequence is Quinoprotein ethanol dehydrogenase (623 aa).

Positions Met-1–Ala-34 are cleaved as a signal peptide. 2 residues coordinate Ca(2+): Asp-45 and Asn-51. Glu-95 contributes to the pyrroloquinoline quinone binding site. A disulfide bond links Cys-139 and Cys-140. Residues Arg-145, Thr-189, and His-207–Ser-209 each bind pyrroloquinoline quinone. Glu-213 provides a ligand contact to Ca(2+). Residues Gly-242–Gly-279 form a disordered region. Positions 300 and 350 each coordinate Ca(2+). The active-site Proton acceptor is Asp-350. Residue Arg-378 coordinates pyrroloquinoline quinone. Residues Arg-414 to Val-436 are disordered. WD repeat units follow at residues Glu-515–Lys-556 and Thr-559–Pro-601. 2 residues coordinate pyrroloquinoline quinone: Trp-523 and Ala-587.

Belongs to the bacterial PQQ dehydrogenase family. In terms of assembly, homodimer. It depends on pyrroloquinoline quinone as a cofactor. Ca(2+) is required as a cofactor.

The protein localises to the periplasm. It catalyses the reaction a primary alcohol + 2 Fe(III)-[cytochrome c] = an aldehyde + 2 Fe(II)-[cytochrome c] + 2 H(+). It carries out the reaction ethanol + 2 Fe(III)-[cytochrome c] = acetaldehyde + 2 Fe(II)-[cytochrome c] + 2 H(+). The catalysed reaction is ethanol + A = acetaldehyde + AH2. The enzyme catalyses 1-propanol + 2 Fe(III)-[cytochrome c] = propanal + 2 Fe(II)-[cytochrome c] + 2 H(+). Its pathway is alcohol metabolism; ethanol degradation; acetate from ethanol: step 1/2. Its activity is regulated as follows. Enhanced by the presence of ethylamine or NH4(+) ions. Functionally, catalyzes the oxidation of ethanol and other primary alcohols to the corresponding aldehydes, except methanol, which is not a substrate. Uses a specific inducible cytochrome c550, encoded by the adjacent gene in the locus, as electron acceptor. Is a key enzyme of the carbon and energy metabolism during growth of P.putida on ethanol as the sole carbon and energy source. Displays lower activity on secondary alcohols, aldehydes and diols. Is not active with sugar alcohols such as glycerol and D-sorbitol. In vitro, reacts well with phenazine methosulfate (PMS) as an electron acceptor but not with NAD(P), potassium ferricyanide, or molecular oxygen. This Pseudomonas putida (Arthrobacter siderocapsulatus) protein is Quinoprotein ethanol dehydrogenase.